The primary structure comprises 453 residues: Kynurenine 3-monooxygenase (453 aa).

Belongs to the aromatic-ring hydroxylase family. KMO subfamily. Requires FAD as cofactor.

It carries out the reaction L-kynurenine + NADPH + O2 + H(+) = 3-hydroxy-L-kynurenine + NADP(+) + H2O. It participates in cofactor biosynthesis; NAD(+) biosynthesis; quinolinate from L-kynurenine: step 1/3. Catalyzes the hydroxylation of L-kynurenine (L-Kyn) to form 3-hydroxy-L-kynurenine (L-3OHKyn). Required for synthesis of quinolinic acid. This chain is Kynurenine 3-monooxygenase, found in Salinispora tropica (strain ATCC BAA-916 / DSM 44818 / JCM 13857 / NBRC 105044 / CNB-440).